Reading from the N-terminus, the 120-residue chain is Hydrogenase maturation factor HypA (120 aa).

Histidine 2 contributes to the Ni(2+) binding site. The Zn(2+) site is built by cysteine 73, histidine 76, cysteine 89, and cysteine 92.

It belongs to the HypA/HybF family.

Involved in the maturation of [NiFe] hydrogenases. Required for nickel insertion into the metal center of the hydrogenase. This is Hydrogenase maturation factor HypA from Deinococcus radiodurans (strain ATCC 13939 / DSM 20539 / JCM 16871 / CCUG 27074 / LMG 4051 / NBRC 15346 / NCIMB 9279 / VKM B-1422 / R1).